Consider the following 533-residue polypeptide: MHSLNTRRGLGLAAAMTLAAGALVAPTGAAAPADPNGSTIDPDAATTLTVHKCEQTDTNGVKEGTGNEDPQAECKPVSDVEFTITKLNVDLTTYDGWKTLADLKGDVVKAGALKSTTVQKITTGANGLASFTDAQTEVGAYLVSETRTPDKVIPAEDFVVTLPMTNPQDTAKWNYNVHVYPKNTLSGVDKQVTDKPAPGSGRDITYTITTSIPKVDYPGGARIKRYEVVDRLDKRIKKEALTPVVKIVGQNEVTLAETTDYTLITAEGKDHNWATIQLTEEGRRKASEARYNGNGETKLQVTLNAKFDAAVNLEGDLSNTAGLIPNDSPNFTWDPNNPGTTTDIPGIPTTPVLSKYGKVVLTKTGTDDLADKTKYNGAQFQVYECTKTASGATLRDSDPSTQTVDPLTIGGEKTFTTAGQGTVEINYLRANDYVNGAKKDQLTDEDYYCLVETKAPEGYNLQADPLPFRVLAEKAEKKAATEVTVTDIPKNAGFRLPLTGANGVIFLTIAGALLVAGGAVVAYANKRRHVAKH.

An N-terminal signal peptide occupies residues 1–30; that stretch reads MHSLNTRRGLGLAAAMTLAAGALVAPTGAA. The short motif at 496 to 500 is the LPXTG sorting signal element; the sequence is LPLTG. T499 bears the Pentaglycyl murein peptidoglycan amidated threonine mark. The propeptide at 500–533 is removed by sortase; the sequence is GANGVIFLTIAGALLVAGGAVVAYANKRRHVAKH.

It is found in the secreted. The protein localises to the cell wall. The protein resides in the fimbrium. In terms of biological role, major fimbrial subunit of A.viscosus. This Actinomyces viscosus protein is Fimbrial subunit type 1.